We begin with the raw amino-acid sequence, 376 residues long: Transcription initiation factor IIA subunit 1 (376 aa).

Ala2 carries the post-translational modification N-acetylalanine. Low complexity-rich tracts occupy residues 69-79 and 89-105; these read QVQQQHQPQQQ and QAQPQQTVPQQAQTQQV. 3 disordered regions span residues 69–107, 247–266, and 274–329; these read QVQQQHQPQQQQHHHHHHHQQAQPQQTVPQQAQTQQVLI, QAQITATGQQQPQAQPAQTQ, and DGTG…QELF. Residues Ser280, Ser281, Ser316, and Ser321 each carry the phosphoserine; by TAF1 modification. Acidic residues predominate over residues 280-329; it reads SSEEDEDEEEDYDDDEEEDKEKDGAEDGQVEEEPLNSEDDVSDEEGQELF. DNA-binding residues include His343 and Arg344.

This sequence belongs to the TFIIA subunit 1 family. TFIIA is a heterodimer of the large unprocessed subunit 1 and a small subunit gamma. It was originally believed to be a heterotrimer of an alpha (p35), a beta (p19) and a gamma subunit (p12). TFIIA forms a complex with TBP. Part of TBP-based Pol II pre-initiation complex (PIC), in which Pol II core assembles with general transcription factors and other specific initiation factors including GTF2E1, GTF2E2, GTF2F1, GTF2F2, TCEA1, ERCC2, ERCC3, GTF2H2, GTF2H3, GTF2H4, GTF2H5, GTF2A1, GTF2A2, GTF2B and TBP; this large multi-subunit PIC complex mediates DNA unwinding and targets Pol II core to the transcription start site where the first phosphodiester bond forms. Post-translationally, the alpha and beta subunits are postranslationally produced from the precursor form by TASP1. The cleavage promotes proteasomal degradation.

The protein localises to the nucleus. TFIIA is a component of the transcription machinery of RNA polymerase II and plays an important role in transcriptional activation. TFIIA in a complex with TBP mediates transcriptional activity. The sequence is that of Transcription initiation factor IIA subunit 1 (GTF2A1) from Homo sapiens (Human).